A 607-amino-acid polypeptide reads, in one-letter code: UvrABC system protein C (607 aa).

The GIY-YIG domain occupies 16-94; the sequence is GRPGVYRMFD…IKEWRPPYNI (79 aa). The UVR domain occupies 203 to 238; that stretch reads NALTDELSTAMEAAASTLDFEKAAELRDQISLLRRV.

The protein belongs to the UvrC family. In terms of assembly, interacts with UvrB in an incision complex.

The protein resides in the cytoplasm. In terms of biological role, the UvrABC repair system catalyzes the recognition and processing of DNA lesions. UvrC both incises the 5' and 3' sides of the lesion. The N-terminal half is responsible for the 3' incision and the C-terminal half is responsible for the 5' incision. The sequence is that of UvrABC system protein C from Pseudomonas fluorescens (strain ATCC BAA-477 / NRRL B-23932 / Pf-5).